A 1170-amino-acid chain; its full sequence is Glucose transport transcription regulator RGT1 (1170 aa).

Polar residues predominate over residues 1-22 (MNELNTVSTNSSDSTKNGGTSN). A disordered region spans residues 1–46 (MNELNTVSTNSSDSTKNGGTSNSPDDMDSAAAASHAIKKRTKASRA). Positions 47 to 76 (CDQCRKKKIKCDYKDEKGVCSNCQRNGDRC) form a DNA-binding region, zn(2)-C6 fungal-type. The disordered stretch occupies residues 77–149 (SFDRVPLKRG…PSTPSRSNSV (73 aa)). The segment covering 99-108 (RTNEIQDHNN) has biased composition (basic and acidic residues). Over residues 113 to 138 (NTFDNSNNTLNNNTGNSGDNGINSNT) the composition is skewed to low complexity. Over residues 139–149 (VPSTPSRSNSV) the composition is skewed to polar residues. A phosphoserine mark is found at Ser202, Ser205, Ser208, and Ser229. Disordered regions lie at residues 226-254 (VQQS…SASG), 269-288 (APTD…IPSL), 293-323 (SNSL…LQQG), 384-506 (AQQT…HPMT), and 944-977 (NYRP…SAAP). Residues 239–250 (SGNANGSVTGSG) show a composition bias toward low complexity. Basic and acidic residues predominate over residues 271 to 280 (TDDHNGEQTR). Phosphoserine is present on residues Ser283 and Ser284. Composition is skewed to low complexity over residues 293-302 (SNSLLLGGQP), 309-323 (QQSQ…LQQG), and 385-397 (QQTQ…QVPQ). Ser410 and Ser414 each carry phosphoserine. Positions 411–422 (APVSVTLSTDRL) are enriched in polar residues. Residues 424-444 (GNENNNGEINNNNGSNNSGSS) show a composition bias toward low complexity. The span at 445–457 (KDTSQHSQESVTT) shows a compositional bias: polar residues. A compositionally biased stretch (basic residues) spans 473-488 (STKKRRKSYVSKKTKP). Residues 493–506 (SISITSKDSAHPMT) are compositionally biased toward polar residues. Ser1130 is modified (phosphoserine).

This sequence belongs to the EDS1/RGT1 family. Glucose-induced phosphorylation regulates the DNA-binding activity. Hyperphosphorylation in cells growing on high levels of glucose does prevents DNA-binding and dephosphorylation restores DNA-binding ability.

It localises to the nucleus. Its subcellular location is the cytoplasm. Functionally, glucose-responsive transcription factor that regulates expression of several glucose transporter (HXT) genes in response to glucose. In the absence of glucose, it functions as a transcriptional repressor, whereas high concentrations of glucose cause it to function as a transcriptional activator. In cells growing on low levels of glucose, has a neutral role, neither repressing nor activating transcription. Binds the consensus binding site sequence 5'-CGGANNA-3', of which multiple copies are present in all HXT promoters regulated by RGT1. The protein is Glucose transport transcription regulator RGT1 (RGT1) of Saccharomyces cerevisiae (strain RM11-1a) (Baker's yeast).